Consider the following 417-residue polypeptide: Peptide chain release factor subunit 1 (417 aa).

This sequence belongs to the eukaryotic release factor 1 family. Heterodimer of two subunits, one of which binds GTP.

It localises to the cytoplasm. Its function is as follows. Directs the termination of nascent peptide synthesis (translation) in response to the termination codons UAA, UAG and UGA. The polypeptide is Peptide chain release factor subunit 1 (prf1) (Thermoplasma acidophilum (strain ATCC 25905 / DSM 1728 / JCM 9062 / NBRC 15155 / AMRC-C165)).